Consider the following 123-residue polypeptide: Protein Wnt-3 (123 aa).

S1 carries O-palmitoleoyl serine; by PORCN lipidation. Cysteines 89 and 104 form a disulfide. N90 carries an N-linked (GlcNAc...) asparagine glycan.

It belongs to the Wnt family. Palmitoleoylation is required for efficient binding to frizzled receptors. Depalmitoleoylation leads to Wnt signaling pathway inhibition.

It is found in the secreted. Its subcellular location is the extracellular space. The protein localises to the extracellular matrix. Ligand for members of the frizzled family of seven transmembrane receptors. Functions in the canonical Wnt signaling pathway that results in activation of transcription factors of the TCF/LEF family. Required for normal embryonic development. This Eptatretus stoutii (Pacific hagfish) protein is Protein Wnt-3 (WNT-3).